A 262-amino-acid chain; its full sequence is Acyl-[acyl-carrier-protein]--UDP-N-acetylglucosamine O-acyltransferase (262 aa).

It belongs to the transferase hexapeptide repeat family. LpxA subfamily. In terms of assembly, homotrimer.

The protein resides in the cytoplasm. The enzyme catalyses a (3R)-hydroxyacyl-[ACP] + UDP-N-acetyl-alpha-D-glucosamine = a UDP-3-O-[(3R)-3-hydroxyacyl]-N-acetyl-alpha-D-glucosamine + holo-[ACP]. Its pathway is glycolipid biosynthesis; lipid IV(A) biosynthesis; lipid IV(A) from (3R)-3-hydroxytetradecanoyl-[acyl-carrier-protein] and UDP-N-acetyl-alpha-D-glucosamine: step 1/6. In terms of biological role, involved in the biosynthesis of lipid A, a phosphorylated glycolipid that anchors the lipopolysaccharide to the outer membrane of the cell. The protein is Acyl-[acyl-carrier-protein]--UDP-N-acetylglucosamine O-acyltransferase of Burkholderia lata (strain ATCC 17760 / DSM 23089 / LMG 22485 / NCIMB 9086 / R18194 / 383).